Reading from the N-terminus, the 319-residue chain is Lambda-crystallin homolog (319 aa).

Alanine 2 carries the post-translational modification N-acetylalanine. Serine 3 is subject to Phosphoserine. Residues 16-17, aspartate 36, glutamate 97, and lysine 102 each bind NAD(+); that span reads VI. Serine 111 is subject to Phosphoserine.

Belongs to the 3-hydroxyacyl-CoA dehydrogenase family. In terms of assembly, homodimer. Widely expressed, with highest levels in liver and kidney.

It localises to the cytoplasm. The catalysed reaction is L-gulonate + NAD(+) = 3-dehydro-L-gulonate + NADH + H(+). With respect to regulation, inhibited by malonate. Functionally, has high L-gulonate 3-dehydrogenase activity. It also exhibits low dehydrogenase activity toward L-3-hydroxybutyrate (HBA) and L-threonate. The chain is Lambda-crystallin homolog (CRYL1) from Homo sapiens (Human).